A 60-amino-acid polypeptide reads, in one-letter code: Large ribosomal subunit protein uL30 (60 aa).

Belongs to the universal ribosomal protein uL30 family. As to quaternary structure, part of the 50S ribosomal subunit.

The chain is Large ribosomal subunit protein uL30 from Streptococcus thermophilus (strain CNRZ 1066).